Consider the following 280-residue polypeptide: Thylakoid lumenal protein TL20.3, chloroplastic (280 aa).

A chloroplast-targeting transit peptide spans 1-59; the sequence is MAFSSLSPLPMKSLDISRSSSSVSRSPYHFQRYLLRRLQLSSRSNLEIKDSSNTREGCC. The N-terminal 31 residues, 60–90, are a transit peptide targeting the thylakoid; that stretch reads SSAESNTWKRILSAAMAAAVIASSSGVPAMA. 2 Pentapeptide repeat domains span residues 124–163 and 169–208; these read ENFRRANFTSADMRESDFSGSTFNGAYLEKAVAYKANFSG and TLMDRMVLNEANLTNAVLVRSVLTRSDLGGAKIEGADFSD.

In terms of assembly, interacts with thioredoxin. Interacts in vitro with LTO1.

The protein localises to the plastid. It localises to the chloroplast thylakoid lumen. Pentapeptide repeat protein of unknown function. Subject to degradation when reduced. The protein is Thylakoid lumenal protein TL20.3, chloroplastic of Arabidopsis thaliana (Mouse-ear cress).